A 1206-amino-acid chain; its full sequence is Translocase of chloroplast 132, chloroplastic (1206 aa).

Gly-2 is subject to N-acetylglycine. Residues 13–33 (REDKKLAEDRISDEQVVKNEL) adopt a coiled-coil conformation. Disordered stretches follow at residues 33 to 75 (LVRS…SDDL) and 97 to 119 (VGDL…VGES). The segment covering 39-49 (VRDDNEDEVFE) has biased composition (acidic residues). Ser-195 carries the post-translational modification Phosphoserine. The segment at 233 to 499 (QTEQEVEEGE…TTTEADEHDE (267 aa)) is disordered. Polar residues predominate over residues 309–324 (AYTSNIVTNASGDNEV). Low complexity predominate over residues 325 to 336 (SSAVTSSPLEES). Residues Ser-337, Ser-363, and Ser-398 each carry the phosphoserine modification. Residues 357-379 (LASSPHSYPESTEVHSNSGSPGV) are compositionally biased toward polar residues. Basic and acidic residues predominate over residues 403 to 427 (KELEKQQSSRVHVDPEITENSHVET). Residues 430-440 (EVVSSVSPTES) are compositionally biased toward low complexity. Residues 468 to 492 (APQQSRVNGNGSHNQFQQAEDSTTT) are compositionally biased toward polar residues. Positions 572 to 801 (DFSCTIMVLG…KLQDNIPGRP (230 aa)) constitute an AIG1-type G domain. Residues 581–588 (GKSGVGKS) are G1. Residues 584 to 589 (GVGKSA) and 603 to 608 (DAFQMG) contribute to the GTP site. Ser-588 is a Mg(2+) binding site. The interval 603–606 (DAFQ) is homodimerization. The interval 607 to 611 (MGTKR) is G2. A G3 region spans residues 628 to 631 (DTPG). The tract at residues 666–671 (RLDMQS) is homodimerization. A G4 region spans residues 700–703 (THAA). GTP-binding positions include His-701 and 749–750 (EN). The tract at residues 749-751 (ENH) is G5. The segment at 824 to 862 (QPKLPEQQYGDEEDEDDLEESSDSDEESEYDQLPPFKSL) is disordered. The span at 832-853 (YGDEEDEDDLEESSDSDEESEY) shows a compositional bias: acidic residues. A helical transmembrane segment spans residues 1182–1199 (LAMVAIVPLFKKLLSYYY).

Belongs to the TRAFAC class TrmE-Era-EngA-EngB-Septin-like GTPase superfamily. AIG1/Toc34/Toc159-like paraseptin GTPase family. TOC159 subfamily. As to quaternary structure, homodimer. Part of the TOC core complex that includes 1 protein for the specific recognition of transit peptides surrounded by a ring composed of four proteins forming translocation channels, and four to five GTP-binding proteins providing energy. This core complex can interact with components of the TIC complex to form a larger import complex. Chloroplastic protein precursor such as prSS (precursor of the RuBisCO small subunit) interacts with these complexes. The TOC complex contains a specific subset of polar lipids such as digalactosyldiacylglyceride (DGDG), phosphatidylcholine (PC) and phosphatidylglycerol (PG). Requires Mg(2+) as cofactor. Post-translationally, phosphorylated by KOC1. Expressed in seedlings, leaves, flowers, and roots.

Its subcellular location is the plastid. It localises to the chloroplast outer membrane. The protein resides in the cytoplasm. Its function is as follows. GTPase involved in protein precursor import into chloroplasts. Seems to recognize chloroplast-destined precursor proteins and regulate their presentation to the translocation channel through GTP hydrolysis. Probably specialized in the import of nuclear encoded non-photosynthetic preproteins from the cytoplasm to the chloroplast. This is Translocase of chloroplast 132, chloroplastic from Arabidopsis thaliana (Mouse-ear cress).